We begin with the raw amino-acid sequence, 221 residues long: Thiamine-phosphate synthase (221 aa).

4-amino-2-methyl-5-(diphosphooxymethyl)pyrimidine contacts are provided by residues 41–45 (QLRDK) and Asn82. The Mg(2+) site is built by Asp83 and Asp102. Residue Ser120 coordinates 4-amino-2-methyl-5-(diphosphooxymethyl)pyrimidine. Residue 146 to 148 (TPT) participates in 2-[(2R,5Z)-2-carboxy-4-methylthiazol-5(2H)-ylidene]ethyl phosphate binding. Lys149 provides a ligand contact to 4-amino-2-methyl-5-(diphosphooxymethyl)pyrimidine. Gly177 contacts 2-[(2R,5Z)-2-carboxy-4-methylthiazol-5(2H)-ylidene]ethyl phosphate.

The protein belongs to the thiamine-phosphate synthase family. It depends on Mg(2+) as a cofactor.

It carries out the reaction 2-[(2R,5Z)-2-carboxy-4-methylthiazol-5(2H)-ylidene]ethyl phosphate + 4-amino-2-methyl-5-(diphosphooxymethyl)pyrimidine + 2 H(+) = thiamine phosphate + CO2 + diphosphate. The enzyme catalyses 2-(2-carboxy-4-methylthiazol-5-yl)ethyl phosphate + 4-amino-2-methyl-5-(diphosphooxymethyl)pyrimidine + 2 H(+) = thiamine phosphate + CO2 + diphosphate. The catalysed reaction is 4-methyl-5-(2-phosphooxyethyl)-thiazole + 4-amino-2-methyl-5-(diphosphooxymethyl)pyrimidine + H(+) = thiamine phosphate + diphosphate. It participates in cofactor biosynthesis; thiamine diphosphate biosynthesis; thiamine phosphate from 4-amino-2-methyl-5-diphosphomethylpyrimidine and 4-methyl-5-(2-phosphoethyl)-thiazole: step 1/1. In terms of biological role, condenses 4-methyl-5-(beta-hydroxyethyl)thiazole monophosphate (THZ-P) and 2-methyl-4-amino-5-hydroxymethyl pyrimidine pyrophosphate (HMP-PP) to form thiamine monophosphate (TMP). The chain is Thiamine-phosphate synthase from Mycolicibacterium vanbaalenii (strain DSM 7251 / JCM 13017 / BCRC 16820 / KCTC 9966 / NRRL B-24157 / PYR-1) (Mycobacterium vanbaalenii).